A 258-amino-acid chain; its full sequence is MPKTLTEKLNAIKAAGKGIFVPYIMAGDHEKGLDGLAETIHFLEDLGVSAIEVGIPFSDPVADGPVIEEAGLRSLAHGTSTQALVETLKTIETEIPLVIMTYFNPLFQYGVENFVKDLADTAVKGLIIPDLPHEHANFVEPFLANTDIALIPLVSLTTGIERQKELIEGAEGFIYAVAINGVTGKSGNYRADLDKHLAQLHQVADIPVLTGFGVSSQADLERFNAVSDGVIVGSKIVKALHQGEPIQDFIKQAVAYQK.

Catalysis depends on proton acceptor residues glutamate 52 and aspartate 63.

This sequence belongs to the TrpA family. In terms of assembly, tetramer of two alpha and two beta chains.

The enzyme catalyses (1S,2R)-1-C-(indol-3-yl)glycerol 3-phosphate + L-serine = D-glyceraldehyde 3-phosphate + L-tryptophan + H2O. The protein operates within amino-acid biosynthesis; L-tryptophan biosynthesis; L-tryptophan from chorismate: step 5/5. The alpha subunit is responsible for the aldol cleavage of indoleglycerol phosphate to indole and glyceraldehyde 3-phosphate. The chain is Tryptophan synthase alpha chain from Streptococcus pneumoniae (strain 70585).